The sequence spans 267 residues: MKAEATVIPSRCARGLPSWQVLSPVQPWQTSAPQNTTQPKLLAPHQHEKSQKKSSLLKELGAFHITIALLHLVFGGYLASIVKNLHLVVLKSWYPFWGAASFLISGILAITMKTFSKTYLKMLCLMTNLISLFCVLSGLFVISKDLFLESPFESPIWRMYPNSTVHIQRLELALLCFTVLELFLPVPTAVTAWRGDCPSAKNDDACLVPNTPLHLKGLPVEPPPSYQSVIQGDAQHKQHQRLREVKQVAPDTWIVTDGAAIWTQTAN.

Over 1–61 the chain is Cytoplasmic; it reads MKAEATVIPS…KKSSLLKELG (61 aa). A helical membrane pass occupies residues 62–82; sequence AFHITIALLHLVFGGYLASIV. Residues 83–91 are Extracellular-facing; sequence KNLHLVVLK. Residues 92-112 traverse the membrane as a helical segment; sequence SWYPFWGAASFLISGILAITM. Residues 113 to 121 are Cytoplasmic-facing; it reads KTFSKTYLK. A helical transmembrane segment spans residues 122-142; sequence MLCLMTNLISLFCVLSGLFVI. The Extracellular portion of the chain corresponds to 143 to 171; it reads SKDLFLESPFESPIWRMYPNSTVHIQRLE. The chain crosses the membrane as a helical span at residues 172–192; sequence LALLCFTVLELFLPVPTAVTA. Topologically, residues 193-267 are cytoplasmic; that stretch reads WRGDCPSAKN…GAAIWTQTAN (75 aa).

The protein belongs to the MS4A family.

The protein localises to the membrane. May be involved in signal transduction as a component of a multimeric receptor complex. This is Membrane-spanning 4-domains subfamily A member 10 (MS4A10) from Homo sapiens (Human).